The following is a 391-amino-acid chain: Phosphoglycerate kinase (391 aa).

Substrate contacts are provided by residues Asp-21 to Asn-23, Arg-36, His-59 to Arg-62, Arg-113, and Arg-146. ATP is bound by residues Lys-197, Glu-319, and Gly-345–Thr-348.

This sequence belongs to the phosphoglycerate kinase family. As to quaternary structure, monomer.

The protein localises to the cytoplasm. The enzyme catalyses (2R)-3-phosphoglycerate + ATP = (2R)-3-phospho-glyceroyl phosphate + ADP. The protein operates within carbohydrate degradation; glycolysis; pyruvate from D-glyceraldehyde 3-phosphate: step 2/5. In Xylella fastidiosa (strain 9a5c), this protein is Phosphoglycerate kinase.